The chain runs to 265 residues: Glutamate racemase (265 aa).

Residues 9–10 and 41–42 contribute to the substrate site; these read DS and YG. Catalysis depends on Cys73, which acts as the Proton donor/acceptor. 74–75 contacts substrate; it reads NT. Catalysis depends on Cys180, which acts as the Proton donor/acceptor. Residue 181–182 coordinates substrate; the sequence is TH.

It belongs to the aspartate/glutamate racemases family.

The enzyme catalyses L-glutamate = D-glutamate. The protein operates within cell wall biogenesis; peptidoglycan biosynthesis. Its function is as follows. Provides the (R)-glutamate required for cell wall biosynthesis. In Aliivibrio salmonicida (strain LFI1238) (Vibrio salmonicida (strain LFI1238)), this protein is Glutamate racemase.